A 346-amino-acid chain; its full sequence is Phosphate acyltransferase (346 aa).

It belongs to the PlsX family. Homodimer. Probably interacts with PlsY.

It is found in the cytoplasm. It carries out the reaction a fatty acyl-[ACP] + phosphate = an acyl phosphate + holo-[ACP]. It functions in the pathway lipid metabolism; phospholipid metabolism. In terms of biological role, catalyzes the reversible formation of acyl-phosphate (acyl-PO(4)) from acyl-[acyl-carrier-protein] (acyl-ACP). This enzyme utilizes acyl-ACP as fatty acyl donor, but not acyl-CoA. This is Phosphate acyltransferase from Brucella melitensis biotype 2 (strain ATCC 23457).